We begin with the raw amino-acid sequence, 1138 residues long: Mastermind-like protein 3 (1138 aa).

A compositionally biased stretch (polar residues) spans 37–48 (PNSTPAAPSSNH). 6 disordered regions span residues 37 to 68 (PNST…AAVP), 119 to 148 (EQRA…ASAE), 169 to 188 (RSPL…FSPT), 207 to 237 (PSNM…THTP), 334 to 480 (EEKK…QRAK), and 503 to 547 (QQQQ…PQAF). The segment covering 52–64 (GGCGGSGGPGGGS) has biased composition (gly residues). Polar residues-rich tracts occupy residues 130–139 (GKQQHPSKPQ) and 173–188 (NGDQ…FSPT). Polar residues-rich tracts occupy residues 343 to 359 (QPAT…SVKS) and 372 to 394 (GSPQ…ATSL). The segment covering 395–411 (PSVASTPAAPNPASSPA) has biased composition (low complexity). Polar residues predominate over residues 414 to 426 (AVQSPQTPNQAHT). Low complexity predominate over residues 467 to 480 (QLKQMAAQQQQRAK). Position 603 is an N6-acetyllysine (lysine 603). Disordered stretches follow at residues 615–662 (RMTP…PRAH), 691–721 (HGQE…MVSG), 968–991 (LQGM…YPLQ), 1024–1084 (AAMG…SQAY), and 1090–1109 (QDVS…PGLP). A compositionally biased stretch (low complexity) spans 633–649 (QQQQQQQQQQQQQQQQQ). Residues 1064-1084 (PPAQQQIPSGSFAPSSQSQAY) are compositionally biased toward polar residues.

It belongs to the mastermind family. As to quaternary structure, interacts through its N-terminal region with the ankyrin repeat region of the Notch proteins NOTCH1, NOTCH2, NOTCH3 and NOTCH4. Forms a DNA-binding complex with Notch proteins and RBPSUH/RBP-J kappa.

The protein localises to the nucleus speckle. In terms of biological role, acts as a transcriptional coactivator for NOTCH proteins. Has been shown to amplify NOTCH-induced transcription of HES1. The protein is Mastermind-like protein 3 of Homo sapiens (Human).